Here is a 436-residue protein sequence, read N- to C-terminus: C4-dicarboxylate transport protein 2 (436 aa).

Transmembrane regions (helical) follow at residues valine 14–alanine 34, leucine 45–methionine 65, methionine 77–valine 97, valine 142–glycine 162, proline 198–valine 218, leucine 223–alanine 243, valine 290–leucine 310, isoleucine 331–glycine 351, and isoleucine 353–isoleucine 373. The disordered stretch occupies residues glutamate 414 to valine 436.

Belongs to the dicarboxylate/amino acid:cation symporter (DAACS) (TC 2.A.23) family.

The protein localises to the cell inner membrane. Functionally, responsible for the transport of dicarboxylates such as succinate, fumarate, and malate from the periplasm across the membrane. The protein is C4-dicarboxylate transport protein 2 of Pseudomonas aeruginosa (strain UCBPP-PA14).